We begin with the raw amino-acid sequence, 336 residues long: Inositol 2-dehydrogenase (336 aa).

The protein belongs to the Gfo/Idh/MocA family. As to quaternary structure, homotetramer.

It catalyses the reaction myo-inositol + NAD(+) = scyllo-inosose + NADH + H(+). In terms of biological role, involved in the oxidation of myo-inositol (MI) to 2-keto-myo-inositol (2KMI or 2-inosose). This chain is Inositol 2-dehydrogenase, found in Pseudomonas fluorescens (strain ATCC BAA-477 / NRRL B-23932 / Pf-5).